Reading from the N-terminus, the 77-residue chain is Sec-independent protein translocase protein TatA (77 aa).

The chain crosses the membrane as a helical span at residues valine 3–glycine 23. The disordered stretch occupies residues threonine 56 to proline 77. The span at glutamine 63 to proline 77 shows a compositional bias: basic and acidic residues.

The protein belongs to the TatA/E family. In terms of assembly, forms a complex with TatC.

The protein resides in the cell inner membrane. Its function is as follows. Part of the twin-arginine translocation (Tat) system that transports large folded proteins containing a characteristic twin-arginine motif in their signal peptide across membranes. TatA could form the protein-conducting channel of the Tat system. The polypeptide is Sec-independent protein translocase protein TatA (Thermosynechococcus vestitus (strain NIES-2133 / IAM M-273 / BP-1)).